The primary structure comprises 403 residues: Phosphoglycerate kinase (403 aa).

Residues 21 to 23 (DFN), Arg-36, 59 to 62 (HLGR), Arg-119, and Arg-154 each bind substrate. Residues Lys-207, Gly-299, Glu-330, and 357–360 (GGDA) each bind ATP.

This sequence belongs to the phosphoglycerate kinase family. In terms of assembly, monomer.

It localises to the cytoplasm. The catalysed reaction is (2R)-3-phosphoglycerate + ATP = (2R)-3-phospho-glyceroyl phosphate + ADP. It participates in carbohydrate degradation; glycolysis; pyruvate from D-glyceraldehyde 3-phosphate: step 2/5. The chain is Phosphoglycerate kinase from Chlamydia felis (strain Fe/C-56) (Chlamydophila felis).